Reading from the N-terminus, the 172-residue chain is Protein-export protein SecB (172 aa).

This sequence belongs to the SecB family. As to quaternary structure, homotetramer, a dimer of dimers. One homotetramer interacts with 1 SecA dimer.

It localises to the cytoplasm. In terms of biological role, one of the proteins required for the normal export of preproteins out of the cell cytoplasm. It is a molecular chaperone that binds to a subset of precursor proteins, maintaining them in a translocation-competent state. It also specifically binds to its receptor SecA. In Cupriavidus pinatubonensis (strain JMP 134 / LMG 1197) (Cupriavidus necator (strain JMP 134)), this protein is Protein-export protein SecB.